Here is a 70-residue protein sequence, read N- to C-terminus: Cold shock-like protein CspG (70 aa).

One can recognise a CSD domain in the interval 7-67; it reads GLVKWFNADK…GQRGPAAANV (61 aa).

The protein resides in the cytoplasm. The sequence is that of Cold shock-like protein CspG (cspG) from Escherichia coli O157:H7.